A 199-amino-acid polypeptide reads, in one-letter code: Glycerol-3-phosphate acyltransferase (199 aa).

Helical transmembrane passes span alanine 3–valine 23, tryptophan 50–valine 70, aspartate 78–leucine 98, leucine 113–leucine 133, and leucine 154–phenylalanine 174.

Belongs to the PlsY family. In terms of assembly, probably interacts with PlsX.

It localises to the cell inner membrane. The enzyme catalyses an acyl phosphate + sn-glycerol 3-phosphate = a 1-acyl-sn-glycero-3-phosphate + phosphate. It participates in lipid metabolism; phospholipid metabolism. Its function is as follows. Catalyzes the transfer of an acyl group from acyl-phosphate (acyl-PO(4)) to glycerol-3-phosphate (G3P) to form lysophosphatidic acid (LPA). This enzyme utilizes acyl-phosphate as fatty acyl donor, but not acyl-CoA or acyl-ACP. This chain is Glycerol-3-phosphate acyltransferase, found in Thermus thermophilus (strain ATCC 27634 / DSM 579 / HB8).